A 350-amino-acid chain; its full sequence is Renin receptor (350 aa).

The first 16 residues, 1 to 16, serve as a signal peptide directing secretion; sequence MAVFVVLLALVAGVLG. Topologically, residues 17–302 are extracellular; it reads NEFSILKSPG…YNLAYKYNFE (286 aa). A helical transmembrane segment spans residues 303-323; that stretch reads YSVVFNMVLWIMIALALAVII. Residues 324–350 are Cytoplasmic-facing; sequence TSYNIWNMDPGYDSIIYRMTNQKIRMD. A Mediates retrograde transport to the ER motif is present at residues 346 to 350; sequence KIRMD.

In terms of assembly, interacts with renin. Accessory component of the multisubunit proton-transporting vacuolar (V)-ATPase protein pump. Interacts (via N-terminus) with ATP6AP1 (via N-terminus). Interacts with ATP6V0D1; ATP6V0D1 is a V-ATPase complex subunit and the interaction promotes V-ATPase complex assembly. Interacts with TMEM9; TMEM9 is a V-ATPase assembly regulator and the interaction induces the interaction with ATP6V0D1. Interacts with VMA21 (via N-terminus); VMA21 is a V-ATPase accessory component. Post-translationally, phosphorylated. Proteolytically cleaved by a furin-like convertase in the trans-Golgi network to generate N- and C-terminal fragments. In terms of tissue distribution, expressed in brain, heart, placenta, liver, kidney and pancreas. Barely detectable in lung and skeletal muscles. In the kidney cortex it is restricted to the mesangium of glomeruli. In the coronary and kidney artery it is expressed in the subendothelium, associated to smooth muscles where it colocalizes with REN. Expressed in vascular structures and by syncytiotrophoblast cells in the mature fetal placenta.

Its subcellular location is the endoplasmic reticulum membrane. It localises to the lysosome membrane. The protein localises to the cytoplasmic vesicle. It is found in the autophagosome membrane. The protein resides in the cell projection. Its subcellular location is the dendritic spine membrane. It localises to the axon. The protein localises to the endosome membrane. It is found in the clathrin-coated vesicle membrane. The protein resides in the secretory vesicle. Its subcellular location is the synaptic vesicle membrane. Multifunctional protein which functions as a renin, prorenin cellular receptor and is involved in the assembly of the lysosomal proton-transporting V-type ATPase (V-ATPase) and the acidification of the endo-lysosomal system. May mediate renin-dependent cellular responses by activating ERK1 and ERK2. By increasing the catalytic efficiency of renin in AGT/angiotensinogen conversion to angiotensin I, may also play a role in the renin-angiotensin system (RAS). Through its function in V-type ATPase (v-ATPase) assembly and acidification of the lysosome it regulates protein degradation and may control different signaling pathways important for proper brain development, synapse morphology and synaptic transmission. In Homo sapiens (Human), this protein is Renin receptor.